A 162-amino-acid chain; its full sequence is Selenoprotein F (162 aa).

A signal peptide spans 1–28; the sequence is MAAGQGGWLRPALGLRLLLATAFQAVSA. Position 93 (Sec93) is a non-standard amino acid, selenocysteine.

Belongs to the selenoprotein M/F family. In terms of assembly, forms a tight complex with UGGT1/UGCGL1. Interacts with UGGT2/UGCGL2. Interacts with RDH11.

It localises to the endoplasmic reticulum lumen. Functionally, may be involved in redox reactions associated with the formation of disulfide bonds. May contribute to the quality control of protein folding in the endoplasmic reticulum. May regulate protein folding by enhancing the catalytic activity of UGGT1/UGCGL1 and UGGT2/UGCGL2. The sequence is that of Selenoprotein F from Mus musculus (Mouse).